The sequence spans 78 residues: Sec-independent protein translocase protein TatA (78 aa).

The helical transmembrane segment at 1–21 (MGMPSMPELLIILLIVVLLFG) threads the bilayer. The disordered stretch occupies residues 46–78 (DEEEVATENKKEIEEKTTASTTKTTADQDTTKA). Basic and acidic residues predominate over residues 52–62 (TENKKEIEEKT). Low complexity predominate over residues 63–78 (TASTTKTTADQDTTKA).

This sequence belongs to the TatA/E family. The Tat system comprises two distinct complexes: a TatABC complex, containing multiple copies of TatA, TatB and TatC subunits, and a separate TatA complex, containing only TatA subunits. Substrates initially bind to the TatABC complex, which probably triggers association of the separate TatA complex to form the active translocon.

It localises to the cell inner membrane. Functionally, part of the twin-arginine translocation (Tat) system that transports large folded proteins containing a characteristic twin-arginine motif in their signal peptide across membranes. TatA could form the protein-conducting channel of the Tat system. The protein is Sec-independent protein translocase protein TatA of Nitratiruptor sp. (strain SB155-2).